The following is a 123-amino-acid chain: Large ribosomal subunit protein bL12 (123 aa).

Belongs to the bacterial ribosomal protein bL12 family. Homodimer. Part of the ribosomal stalk of the 50S ribosomal subunit. Forms a multimeric L10(L12)X complex, where L10 forms an elongated spine to which 2 to 4 L12 dimers bind in a sequential fashion. Binds GTP-bound translation factors.

Functionally, forms part of the ribosomal stalk which helps the ribosome interact with GTP-bound translation factors. Is thus essential for accurate translation. The protein is Large ribosomal subunit protein bL12 of Hydrogenovibrio crunogenus (strain DSM 25203 / XCL-2) (Thiomicrospira crunogena).